Consider the following 518-residue polypeptide: uncharacterized protein (518 aa).

Helical transmembrane passes span 13–33 (WAIS…GIIS), 49–69 (WGSW…PIVG), 86–106 (CLFG…LFLI), 109–129 (LIQA…ILAT), 141–161 (LLGA…SFLL), 169–189 (WLFL…ACFI), 202–222 (AAGI…MTNL), 231–251 (LGNP…AALI), 280–300 (LIIG…PSYV), 312–332 (GYWM…GGAL), 341–361 (TVIL…LWVT), 365–385 (EFVI…GAPL), 410–430 (IGLT…FDQI), and 493–513 (LYAA…IPAF).

Belongs to the major facilitator superfamily. TCR/Tet family.

The protein resides in the cell membrane. This is an uncharacterized protein from Bacillus subtilis (strain 168).